An 80-amino-acid chain; its full sequence is WAP four-disulfide core domain protein 15A (80 aa).

A signal peptide spans 1–20 (MKPSSLLLFTTTILLCLSMA). Residues 29 to 76 (VTPKQGYCPEFLLDCPFVLLPVCSRDKGCKGTKKCCFYYCQMRCVEPW) enclose the WAP domain. Intrachain disulfides connect cysteine 36–cysteine 64, cysteine 43–cysteine 68, cysteine 51–cysteine 63, and cysteine 57–cysteine 72.

The protein resides in the secreted. Its function is as follows. Antibacterial protein. This Mus musculus (Mouse) protein is WAP four-disulfide core domain protein 15A.